The primary structure comprises 166 residues: Signal peptidase complex catalytic subunit SEC11 (166 aa).

The Cytoplasmic segment spans residues 1-9 (MNIRQQITQ). A helical; Signal-anchor for type II membrane protein transmembrane segment spans residues 10–30 (FLSLAYVFSSAFMLWKTLSVI). The Lumenal portion of the chain corresponds to 31-166 (ANSHSPIVVV…LGLSSLFSNE (136 aa)). Residues S44, H83, and D108 each act as charge relay system in the active site. The tract at residues 152–163 (GMLGLLGLSSLF) is C-terminal short (CTS) helix.

It belongs to the peptidase S26B family. In terms of assembly, component of the signal peptidase complex (SPC) composed of a catalytic subunit SEC11 and three accessory subunits SPC1, SPC2 and SPC3. The complex induces a local thinning of the ER membrane which is used to measure the length of the signal peptide (SP) h-region of protein substrates. This ensures the selectivity of the complex towards h-regions shorter than 18-20 amino acids. SPC associates with the translocon complex.

The protein resides in the endoplasmic reticulum membrane. The catalysed reaction is Cleavage of hydrophobic, N-terminal signal or leader sequences from secreted and periplasmic proteins.. Catalytic component of the signal peptidase complex (SPC) which catalyzes the cleavage of N-terminal signal sequences from nascent proteins as they are translocated into the lumen of the endoplasmic reticulum. Specifically cleaves N-terminal signal peptides that contain a hydrophobic alpha-helix (h-region) shorter than 18-20 amino acids. This Candida albicans (strain SC5314 / ATCC MYA-2876) (Yeast) protein is Signal peptidase complex catalytic subunit SEC11 (SEC11).